We begin with the raw amino-acid sequence, 341 residues long: Very-long-chain 3-oxoacyl-CoA reductase (341 aa).

The chain crosses the membrane as a helical span at residues 15–35 (VVTAFSVIGIVFTILKFTSFA). 8 residues coordinate NADP(+): V61, D115, N142, K177, Y216, K220, V249, and S251. Residue Y216 is the Proton donor of the active site. K220 functions as the Lowers pKa of active site Tyr in the catalytic mechanism.

The protein belongs to the short-chain dehydrogenases/reductases (SDR) family.

The protein resides in the endoplasmic reticulum membrane. The catalysed reaction is a very-long-chain (3R)-3-hydroxyacyl-CoA + NADP(+) = a very-long-chain 3-oxoacyl-CoA + NADPH + H(+). It functions in the pathway lipid metabolism; fatty acid biosynthesis. Component of the microsomal membrane bound fatty acid elongation system, which produces the 26-carbon very long-chain fatty acids (VLCFA) from palmitate. Catalyzes the reduction of the 3-ketoacyl-CoA intermediate that is formed in each cycle of fatty acid elongation. VLCFAs serve as precursors for ceramide and sphingolipids. The polypeptide is Very-long-chain 3-oxoacyl-CoA reductase (Schizosaccharomyces pombe (strain 972 / ATCC 24843) (Fission yeast)).